The sequence spans 182 residues: Ribosome maturation factor RimM (182 aa).

Positions 102 to 182 (EEGDYYWKDL…SIEVDWDPGF (81 aa)) constitute a PRC barrel domain.

Belongs to the RimM family. Binds ribosomal protein uS19.

The protein resides in the cytoplasm. Its function is as follows. An accessory protein needed during the final step in the assembly of 30S ribosomal subunit, possibly for assembly of the head region. Essential for efficient processing of 16S rRNA. May be needed both before and after RbfA during the maturation of 16S rRNA. It has affinity for free ribosomal 30S subunits but not for 70S ribosomes. This Escherichia fergusonii (strain ATCC 35469 / DSM 13698 / CCUG 18766 / IAM 14443 / JCM 21226 / LMG 7866 / NBRC 102419 / NCTC 12128 / CDC 0568-73) protein is Ribosome maturation factor RimM.